Consider the following 265-residue polypeptide: Cytosolic Fe-S cluster assembly factor NUBP2 homolog (265 aa).

22 to 29 is an ATP binding site; sequence GKGGVGKS. Positions 196 and 199 each coordinate [4Fe-4S] cluster.

This sequence belongs to the Mrp/NBP35 ATP-binding proteins family. NUBP2/CFD1 subfamily. In terms of assembly, heterotetramer of 2 NUBP1 and 2 NUBP2 chains. The cofactor is [4Fe-4S] cluster.

The protein localises to the cytoplasm. In terms of biological role, component of the cytosolic iron-sulfur (Fe/S) protein assembly (CIA) machinery. Required for maturation of extramitochondrial Fe-S proteins. The NUBP1-NUBP2 heterotetramer forms a Fe-S scaffold complex, mediating the de novo assembly of an Fe-S cluster and its transfer to target apoproteins. This chain is Cytosolic Fe-S cluster assembly factor NUBP2 homolog, found in Trichoplax adhaerens (Trichoplax reptans).